A 587-amino-acid polypeptide reads, in one-letter code: Formate--tetrahydrofolate ligase (587 aa).

73 to 80 (TPLGEGKS) provides a ligand contact to ATP.

The protein belongs to the formate--tetrahydrofolate ligase family.

It catalyses the reaction (6S)-5,6,7,8-tetrahydrofolate + formate + ATP = (6R)-10-formyltetrahydrofolate + ADP + phosphate. It participates in one-carbon metabolism; tetrahydrofolate interconversion. The chain is Formate--tetrahydrofolate ligase from Syntrophobacter fumaroxidans (strain DSM 10017 / MPOB).